Consider the following 670-residue polypeptide: MTNIQTQLDNLRKTLRQYEYEYHVLDNPSVPDSEYDRLFHQLKALELEHPEFLTSDSPTQRVGAKPLSGFSQIRHEIPMLSLDNAFSDAEFNAFVKRIEDRLILLPKQLTFCCEPKLDGLAVSILYVNGVLTQAATRGDGTIGEDITANIRTIRNVPLQLLTDNPPARLEVRGEVFMPHAGFERLNKYALEHNEKTFANPRNAAAGSLRQLDPNITSKRPLVLNAYGIGIAEGVDLPTTHYARLQWLKSIGIPVNPEIRLCNGADEVLGFYQDIQNKRSSLGYDIDGTVLKINDIALQNELGFISKAPRWATAYKFPAQEELTLLNDVEFQVGRTGAITPVAKLEPVFVAGVTVSNATLHNGDEIERLNIAIGDTVVIRRAGDVIPQIIGVLHERRPDNAKPIIFPTNCPVCDSQIIRIEGEAVARCTGGLFCAAQRKEALKHFVSRKAMDIDGVGGKLIEQLVDRELIHTPADLFKLDLTTLTRLERMGTKSAENALNSLENAKSTTLARFIFALGIREVGEATALNLANHFKTLDALKDANLEELQQVPDVGEVVANRIFIFWREAHNVAVVEDLIAQGVHWETVEVKEASENLFKDKTVVLTGTLTQMGRNEAKALLQQLGAKVSGSVSSKTDFVIAGDAAGSKLAKAQELNITVLTEEEFLAQITR.

NAD(+)-binding positions include 32 to 36 (DSEYD), 81 to 82 (SL), and E114. K116 functions as the N6-AMP-lysine intermediate in the catalytic mechanism. Residues R137, E174, K291, and K315 each contribute to the NAD(+) site. Positions 409, 412, 427, and 433 each coordinate Zn(2+). One can recognise a BRCT domain in the interval 592–670 (ASENLFKDKT…EEEFLAQITR (79 aa)).

Belongs to the NAD-dependent DNA ligase family. LigA subfamily. It depends on Mg(2+) as a cofactor. Mn(2+) is required as a cofactor.

It carries out the reaction NAD(+) + (deoxyribonucleotide)n-3'-hydroxyl + 5'-phospho-(deoxyribonucleotide)m = (deoxyribonucleotide)n+m + AMP + beta-nicotinamide D-nucleotide.. Functionally, DNA ligase that catalyzes the formation of phosphodiester linkages between 5'-phosphoryl and 3'-hydroxyl groups in double-stranded DNA using NAD as a coenzyme and as the energy source for the reaction. It is essential for DNA replication and repair of damaged DNA. The protein is DNA ligase of Haemophilus influenzae (strain PittEE).